The primary structure comprises 243 residues: Phomoidride biosynthesis cluster protein B (243 aa).

This sequence belongs to the tstB family.

Its function is as follows. Phosphatidylethanolamine-binding protein; part of the gene cluster that mediates the biosynthesis of the antihypercholesterolemic agents phomoidrides which are dimeric anhydrides. Within the pathway, tstB is not essential for dimerization and its function has still to be determined. The pathway begins with the highly reducing polyketide synthase tstA that catalyzes the formation of a C12-fatty acyl-ACP, starting from one acetate and 5 malonate units. The hydrolase tstM is involved in the release of the C12-fatty acyl chain from phiA. The alkylcitrate synthase (ACS) tstJ and the alkylcitrate dehydratase (ACDH) tstI then give rise to decarboxylated monomeric anhydrides by coupling the C12-fatty acyl chain with oxalacetic acid. The cyclase tstC is responsible for the dimerization of the monomeric anhydrides which leads to the production of prephomoidride that contains the characteristic bicyclo[4.3.1]deca-1,6-diene system of phomoidrides. Iterative oxidation catalyzed by the alpha-ketoglutarate-dependent dioxygenase tstK produced then phomoidride A. Finally, the methyltransferase tstE converts phomoidride A to phomoidride B via an acetalization reaction. The phosphatidylethanolamine-binding protein tstB and tstN are not essential for dimerization and their functions have still to be determined. This is Phomoidride biosynthesis cluster protein B from Talaromyces stipitatus (strain ATCC 10500 / CBS 375.48 / QM 6759 / NRRL 1006) (Penicillium stipitatum).